A 70-amino-acid chain; its full sequence is Protein SlyX homolog (70 aa).

It belongs to the SlyX family.

This chain is Protein SlyX homolog, found in Shewanella sp. (strain MR-7).